The sequence spans 90 residues: MPNTSSASKRLRQNEKRRLLNRATRSNMRSTIRRVREAVENNDLETAKNEFKVAQKKLDRAAANNLIHKNAAARTKSRLNNLIKNAAQTA.

The interval 1–28 (MPNTSSASKRLRQNEKRRLLNRATRSNM) is disordered.

The protein belongs to the bacterial ribosomal protein bS20 family.

Functionally, binds directly to 16S ribosomal RNA. This Rhodopirellula baltica (strain DSM 10527 / NCIMB 13988 / SH1) protein is Small ribosomal subunit protein bS20.